The sequence spans 138 residues: ATP synthase epsilon chain (138 aa).

It belongs to the ATPase epsilon chain family. In terms of assembly, F-type ATPases have 2 components, CF(1) - the catalytic core - and CF(0) - the membrane proton channel. CF(1) has five subunits: alpha(3), beta(3), gamma(1), delta(1), epsilon(1). CF(0) has three main subunits: a, b and c.

It localises to the cell inner membrane. Functionally, produces ATP from ADP in the presence of a proton gradient across the membrane. In Cupriavidus necator (strain ATCC 17699 / DSM 428 / KCTC 22496 / NCIMB 10442 / H16 / Stanier 337) (Ralstonia eutropha), this protein is ATP synthase epsilon chain.